The chain runs to 955 residues: Isoleucine--tRNA ligase (955 aa).

The short motif at 60–70 (PYANGDLHIGH) is the 'HIGH' region element. Position 563 (Glu-563) interacts with L-isoleucyl-5'-AMP. Residues 604 to 608 (KMSKS) carry the 'KMSKS' region motif. Lys-607 contributes to the ATP binding site. Zn(2+) is bound by residues Cys-926, Cys-929, Cys-946, and Cys-949.

The protein belongs to the class-I aminoacyl-tRNA synthetase family. IleS type 1 subfamily. Monomer. Zn(2+) serves as cofactor.

Its subcellular location is the cytoplasm. It carries out the reaction tRNA(Ile) + L-isoleucine + ATP = L-isoleucyl-tRNA(Ile) + AMP + diphosphate. In terms of biological role, catalyzes the attachment of isoleucine to tRNA(Ile). As IleRS can inadvertently accommodate and process structurally similar amino acids such as valine, to avoid such errors it has two additional distinct tRNA(Ile)-dependent editing activities. One activity is designated as 'pretransfer' editing and involves the hydrolysis of activated Val-AMP. The other activity is designated 'posttransfer' editing and involves deacylation of mischarged Val-tRNA(Ile). The polypeptide is Isoleucine--tRNA ligase (Cyanothece sp. (strain PCC 7425 / ATCC 29141)).